Consider the following 475-residue polypeptide: Ankyrin repeat, SAM and basic leucine zipper domain-containing protein 1 (475 aa).

The segment at 1–24 is disordered; it reads MAASALRGPPVAGGGESSESEDDG. Ser-17, Ser-18, and Ser-20 each carry phosphoserine. ANK repeat units lie at residues 45–74, 78–107, 110–144, 148–177, 181–210, and 214–243; these read EKKE…SVDS, YGWT…NASF, DKQS…DPNV, RLMT…EVNT, NGYT…NKML, and DGKM…PLEG. Positions 272 to 334 constitute an SAM domain; sequence SYTAFGDLEV…KILAALKELQ (63 aa).

As to quaternary structure, interacts with DDX4, PIWIL1, RANBP9 and TDRD1.

It is found in the cytoplasm. Functionally, plays a central role during spermatogenesis by repressing transposable elements and preventing their mobilization, which is essential for the germline integrity. Acts via the piRNA metabolic process, which mediates the repression of transposable elements during meiosis by forming complexes composed of piRNAs and Piwi proteins and governs the methylation and subsequent repression of transposons. Its association with pi-bodies suggests a participation in the primary piRNAs metabolic process. Required prior to the pachytene stage to facilitate the production of multiple types of piRNAs, including those associated with repeats involved in the regulation of retrotransposons. May act by mediating protein-protein interactions during germ cell maturation. This Gorilla gorilla gorilla (Western lowland gorilla) protein is Ankyrin repeat, SAM and basic leucine zipper domain-containing protein 1 (ASZ1).